Reading from the N-terminus, the 296-residue chain is Phosphate transport system permease protein PstA (296 aa).

At 1-28 (MAMVEMQTTAALAESRRKMQARRRLKNR) the chain is on the cytoplasmic side. The chain crosses the membrane as a helical span at residues 29 to 50 (IALTLSMATMAFGLFWLIWILM). At 51-82 (STITRGIDGMSLALFTEMTPPPNTEGGGLANA) the chain is on the periplasmic side. Residues 83–102 (LAGSGLLILWATVFGTPLGI) form a helical membrane-spanning segment. The 204-residue stretch at 83 to 286 (LAGSGLLILW…LCVLLLNILA (204 aa)) folds into the ABC transmembrane type-1 domain. Topologically, residues 103 to 126 (MAGIYLAEYGRKSWLAEVIRFIND) are cytoplasmic. Residues 127-146 (ILLSAPSIVVGLFVYTIVVA) form a helical membrane-spanning segment. Topologically, residues 147–150 (QMEH) are periplasmic. The helical transmembrane segment at 151–169 (FSGWAGVIALALLQVPIVI) threads the bilayer. Residues 170–204 (RTTENMLKLVPYSLREAAYALGTPKWKMISAITLK) are Cytoplasmic-facing. A helical transmembrane segment spans residues 205–223 (ASVSGIMTGILLAIARIAG). The Periplasmic portion of the chain corresponds to 224 to 266 (ETAPLLFTALSNQFWSTDMMQPIANLPVTIFKFAMSPFAEWQQ). The chain crosses the membrane as a helical span at residues 267–286 (LAWAGVLIITLCVLLLNILA). At 287-296 (RVVFAKNKHG) the chain is on the cytoplasmic side.

This sequence belongs to the binding-protein-dependent transport system permease family. CysTW subfamily.

It is found in the cell inner membrane. Part of the binding-protein-dependent transport system for phosphate; probably responsible for the translocation of the substrate across the membrane. The sequence is that of Phosphate transport system permease protein PstA (pstA) from Escherichia coli (strain K12).